The chain runs to 475 residues: Ribulose bisphosphate carboxylase large chain (475 aa).

A propeptide spanning residues 1-2 (MS) is cleaved from the precursor. Residue Pro-3 is modified to N-acetylproline. Residue Lys-14 is modified to N6,N6,N6-trimethyllysine. Asn-123 and Thr-173 together coordinate substrate. Lys-175 functions as the Proton acceptor in the catalytic mechanism. Lys-177 is a binding site for substrate. Mg(2+)-binding residues include Lys-201, Asp-203, and Glu-204. N6-carboxylysine is present on Lys-201. The Proton acceptor role is filled by His-294. Residues Arg-295, His-327, and Ser-379 each coordinate substrate.

It belongs to the RuBisCO large chain family. Type I subfamily. Heterohexadecamer of 8 large chains and 8 small chains; disulfide-linked. The disulfide link is formed within the large subunit homodimers. Mg(2+) serves as cofactor. In terms of processing, the disulfide bond which can form in the large chain dimeric partners within the hexadecamer appears to be associated with oxidative stress and protein turnover.

The protein resides in the plastid. It localises to the chloroplast. The enzyme catalyses 2 (2R)-3-phosphoglycerate + 2 H(+) = D-ribulose 1,5-bisphosphate + CO2 + H2O. It catalyses the reaction D-ribulose 1,5-bisphosphate + O2 = 2-phosphoglycolate + (2R)-3-phosphoglycerate + 2 H(+). RuBisCO catalyzes two reactions: the carboxylation of D-ribulose 1,5-bisphosphate, the primary event in carbon dioxide fixation, as well as the oxidative fragmentation of the pentose substrate in the photorespiration process. Both reactions occur simultaneously and in competition at the same active site. The polypeptide is Ribulose bisphosphate carboxylase large chain (Larix occidentalis (Western larch)).